The primary structure comprises 257 residues: Uracil phosphoribosyltransferase (257 aa).

Residues arginine 77, arginine 102, and 129 to 137 each bind 5-phospho-alpha-D-ribose 1-diphosphate; that span reads DPMLATGGS. Residues isoleucine 192 and 197–199 contribute to the uracil site; that span reads GDA. Aspartate 198 lines the 5-phospho-alpha-D-ribose 1-diphosphate pocket. The disordered stretch occupies residues 203–257; it reads QFGPNLFTSSAPSRPEAPAGRGRAAAKTPGRRSARSESPSSTSPSARSRKAAPPA. 2 stretches are compositionally biased toward low complexity: residues 211–230 and 238–248; these read SSAP…AAKT and SESPSSTSPSA.

It belongs to the UPRTase family. Mg(2+) serves as cofactor.

The catalysed reaction is UMP + diphosphate = 5-phospho-alpha-D-ribose 1-diphosphate + uracil. It functions in the pathway pyrimidine metabolism; UMP biosynthesis via salvage pathway; UMP from uracil: step 1/1. Allosterically activated by GTP. In terms of biological role, catalyzes the conversion of uracil and 5-phospho-alpha-D-ribose 1-diphosphate (PRPP) to UMP and diphosphate. The sequence is that of Uracil phosphoribosyltransferase from Mycolicibacterium paratuberculosis (strain ATCC BAA-968 / K-10) (Mycobacterium paratuberculosis).